Here is a 106-residue protein sequence, read N- to C-terminus: Iron-sulfur cluster assembly protein CyaY (106 aa).

It belongs to the frataxin family.

Its function is as follows. Involved in iron-sulfur (Fe-S) cluster assembly. May act as a regulator of Fe-S biogenesis. This Escherichia coli O9:H4 (strain HS) protein is Iron-sulfur cluster assembly protein CyaY.